A 497-amino-acid polypeptide reads, in one-letter code: Glycerol kinase (497 aa).

Thr13 serves as a coordination point for ADP. Residues Thr13, Thr14, and Ser15 each contribute to the ATP site. Position 13 (Thr13) interacts with sn-glycerol 3-phosphate. Arg17 is a binding site for ADP. Residues Arg83, Glu84, and Tyr135 each contribute to the sn-glycerol 3-phosphate site. Glycerol-binding residues include Arg83, Glu84, and Tyr135. His231 bears the Phosphohistidine; by HPr mark. Asp245 contacts sn-glycerol 3-phosphate. Glycerol contacts are provided by Asp245 and Gln246. The ADP site is built by Thr267 and Gly310. ATP-binding residues include Thr267, Gly310, Gln314, and Gly411. ADP is bound by residues Gly411 and Asn415.

This sequence belongs to the FGGY kinase family. Homotetramer and homodimer (in equilibrium). The phosphoenolpyruvate-dependent sugar phosphotransferase system (PTS), including enzyme I, and histidine-containing protein (HPr) are required for the phosphorylation, which leads to the activation of the enzyme.

It carries out the reaction glycerol + ATP = sn-glycerol 3-phosphate + ADP + H(+). It participates in polyol metabolism; glycerol degradation via glycerol kinase pathway; sn-glycerol 3-phosphate from glycerol: step 1/1. Activated by phosphorylation and inhibited by fructose 1,6-bisphosphate (FBP). Functionally, key enzyme in the regulation of glycerol uptake and metabolism. Catalyzes the phosphorylation of glycerol to yield sn-glycerol 3-phosphate. The polypeptide is Glycerol kinase (Listeria monocytogenes serovar 1/2a (strain ATCC BAA-679 / EGD-e)).